The primary structure comprises 908 residues: MSKTRVYELAQQMGIDNKELMAKLAAVGVEVKNHMAAIDDADIKKLSAPATVKEVSQEEVRVKPTLIRRRAKVVEAVAEEPPVEPKAEPAPAEVTTEKVAEKARVEEAPAPEAPVQAAEPVKIATEEAVPERATANKAKILGRVEIPGLTQRAKPPVQREAQPTARVVERPEARPSAERPAPGQRPEGQRPGQRPEGGYRPAGPRPAGQRPEGPRPGYTERPVTRGPERPGQARGPERPAPVVPLEMPPAGEDRRKGRKGKEVAGAGKKGPAGAAVPKRKEEFKKTELFEKHERVFEPGPRGKGKKRQAEKIQIGKKTEITVPKAIKRIIKISETITVGELAKRMGIKANDLIRALMKMGVMATINHALDFDTATILATDFGYEIENVALDIDEILESTPDTPESLVKRPPVVTIMGHVDHGKTSLLDAIRQTNVIAGEAGGITQHIGAYDVTLNGRKITFLDTPGHEAFTAMRARGAKVTDIVILVVAADDGVMPQTREAVNHSKAAGVPIIVAVNKIDKPEAKPERVKQELMELGLVSEEWGGETIFVDVSAKKRVNLPTLLEMVLLQADVLELKANEDKAARGTIVEAKLDKGRGPVATVLVQEGTLKVGDYFVAGIHFGRVRAMQNDRAEKVLSAGPSMPVEVIGFTGVPDAGDVFVALADEKQAKEIASLRQQKVRETELAKHSKLSLEQLYEKIQMGEVKDLNTIVKGDVQGSVEAVSESLRKLSTDAIRLNVIHASVGAITETDVNLATASNAIILGFNVRPEVKAQALAEKEGVDIRLYNIIYDAVDDIKKAMEGLLEPTLREKFLGRAEVRETFSVPKHGTVAGSYVLDGKMIRNSQVRLLRDNVVVFEGKMGSLRRFKDDVKEVASGYECGISIENYNDIKVGDIIESFEMEKVATKL.

A disordered region spans residues 145 to 312 (EIPGLTQRAK…KGKKRQAEKI (168 aa)). Over residues 167 to 177 (VVERPEARPSA) the composition is skewed to basic and acidic residues. Low complexity-rich tracts occupy residues 194–217 (RPEGGYRPAGPRPAGQRPEGPRPG) and 263–276 (VAGAGKKGPAGAAV). Residues 278-296 (KRKEEFKKTELFEKHERVF) show a composition bias toward basic and acidic residues. Residues 408-577 (KRPPVVTIMG…LLQADVLELK (170 aa)) enclose the tr-type G domain. The G1 stretch occupies residues 417–424 (GHVDHGKT). 417–424 (GHVDHGKT) provides a ligand contact to GTP. A G2 region spans residues 442-446 (GITQH). Residues 463–466 (DTPG) are G3. GTP is bound by residues 463-467 (DTPGH) and 517-520 (NKID). The G4 stretch occupies residues 517 to 520 (NKID). Positions 553–555 (SAK) are G5.

It belongs to the TRAFAC class translation factor GTPase superfamily. Classic translation factor GTPase family. IF-2 subfamily.

Its subcellular location is the cytoplasm. Functionally, one of the essential components for the initiation of protein synthesis. Protects formylmethionyl-tRNA from spontaneous hydrolysis and promotes its binding to the 30S ribosomal subunits. Also involved in the hydrolysis of GTP during the formation of the 70S ribosomal complex. The chain is Translation initiation factor IF-2 from Geotalea daltonii (strain DSM 22248 / JCM 15807 / FRC-32) (Geobacter daltonii).